A 1171-amino-acid polypeptide reads, in one-letter code: MASGSRATPTRSPSSARPAAPRHQHHHSQSSGGSTSRAGGGGGGGGGGGGGAAAAESVSKAVAQYTLDARLHAVFEQSGASGRSFDYTQSLRASPTPSSEQQIAAYLSRIQRGGHIQPFGCTLAVADDSSFRLLAYSENTADLLDLSPHHSVPSLDSSAVPPPVSLGADARLLFAPSSAVLLERAFAAREISLLNPLWIHSRVSSKPFYAILHRIDVGVVIDLEPARTEDPALSIAGAVQSQKLAVRAISRLQALPGGDVKLLCDTVVEHVRELTGYDRVMVYRFHEDEHGEVVAESRRNNLEPYIGLHYPATDIPQASRFLFRQNRVRMIADCHAAPVRVIQDPALTQPLCLVGSTLRSPHGCHAQYMANMGSIASLVMAVIISSGGDDDHNISRGSIPSAMKLWGLVVCHHTSPRCIPFPLRYACEFLMQAFGLQLNMELQLAHQLSEKHILRTQTLLCDMLLRDSPTGIVTQSPSIMDLVKCDGAALYYHGKYYPLGVTPTEVQIKDIIEWLTMCHGDSTGLSTDSLADAGYPGAAALGDAVSGMAVAYITPSDYLFWFRSHTAKEIKWGGAKHHPEDKDDGQRMHPRSSFKAFLEVVKSRSLPWENAEMDAIHSLQLILRDSFRDSAEGTSNSKAIVNGQVQLGELELRGIDELSSVAREMVRLIETATVPIFAVDTDGCINGWNAKVAELTGLSVEEAMGKSLVNDLIFKESEETVNKLLSRALRGDEDKNVEIKLKTFGPEQSKGPIFVIVNACSSRDYTKNIVGVCFVGQDVTGQKVVMDKFINIQGDYKAIVHNPNPLIPPIFASDENTCCSEWNTAMEKLTGWSRGEVVGKLLVGEVFGNCCRLKGPDALTKFMIVLHNAIGGQDCEKFPFSFFDKNGKYVQALLTANTRSRMDGEAIGAFCFLQIASPELQQAFEIQRHHEKKCYARMKELAYIYQEIKNPLNGIRFTNSLLEMTDLKDDQRQFLETSTACEKQMSKIVKDASLQSIEDGSLVLEKGEFSLGSVMNAVVSQVMIQLRERDLQLIRDIPDEIKEASAYGDQYRIQQVLCDFLLSMVRFAPAENGWVEIQVRPNIKQNSDGTDTMLFPFRFACPGEGLPPEIVQDMFSNSRWTTQEGIGLSICRKILKLMGGEVQYIRESERSFFHIVLELPQPQQAASRGTS.

The span at 1 to 19 (MASGSRATPTRSPSSARPA) shows a compositional bias: low complexity. The tract at residues 1-53 (MASGSRATPTRSPSSARPAAPRHQHHHSQSSGGSTSRAGGGGGGGGGGGGGAA) is disordered. Positions 38–52 (AGGGGGGGGGGGGGA) are enriched in gly residues. In terms of domain architecture, GAF spans 259-442 (DVKLLCDTVV…AFGLQLNMEL (184 aa)). Cys364 lines the phytochromobilin pocket. PAS domains lie at 661–732 (VARE…LRGD) and 795–866 (DYKA…MIVL). The region spanning 943 to 1161 (YIYQEIKNPL…FFHIVLELPQ (219 aa)) is the Histidine kinase domain.

It belongs to the phytochrome family. Homodimer. Post-translationally, contains one covalently linked phytochromobilin chromophore.

Its function is as follows. Regulatory photoreceptor which exists in two forms that are reversibly interconvertible by light: the Pr form that absorbs maximally in the red region of the spectrum and the Pfr form that absorbs maximally in the far-red region. Photoconversion of Pr to Pfr induces an array of morphogenic responses, whereas reconversion of Pfr to Pr cancels the induction of those responses. Pfr controls the expression of a number of nuclear genes including those encoding the small subunit of ribulose-bisphosphate carboxylase, chlorophyll A/B binding protein, protochlorophyllide reductase, rRNA, etc. It also controls the expression of its own gene(s) in a negative feedback fashion. This Oryza sativa subsp. indica (Rice) protein is Phytochrome B (PHYB).